Reading from the N-terminus, the 147-residue chain is UPF0178 protein Tgr7_2584 (147 aa).

Belongs to the UPF0178 family.

This chain is UPF0178 protein Tgr7_2584, found in Thioalkalivibrio sulfidiphilus (strain HL-EbGR7).